We begin with the raw amino-acid sequence, 471 residues long: UDP-N-acetylmuramate--L-alanine ligase (471 aa).

Position 114-120 (114-120) interacts with ATP; the sequence is GTHGKTT.

The protein belongs to the MurCDEF family.

It localises to the cytoplasm. The enzyme catalyses UDP-N-acetyl-alpha-D-muramate + L-alanine + ATP = UDP-N-acetyl-alpha-D-muramoyl-L-alanine + ADP + phosphate + H(+). It functions in the pathway cell wall biogenesis; peptidoglycan biosynthesis. Cell wall formation. In Agrobacterium fabrum (strain C58 / ATCC 33970) (Agrobacterium tumefaciens (strain C58)), this protein is UDP-N-acetylmuramate--L-alanine ligase.